The chain runs to 120 residues: NAD(P)H-quinone oxidoreductase subunit 3, chloroplastic (120 aa).

A run of 3 helical transmembrane segments spans residues 9 to 29 (IFWA…TISG), 64 to 84 (MFAL…PWAM), and 88 to 108 (VLGI…IVGS).

Belongs to the complex I subunit 3 family. NDH is composed of at least 16 different subunits, 5 of which are encoded in the nucleus.

The protein localises to the plastid. The protein resides in the chloroplast thylakoid membrane. The catalysed reaction is a plastoquinone + NADH + (n+1) H(+)(in) = a plastoquinol + NAD(+) + n H(+)(out). The enzyme catalyses a plastoquinone + NADPH + (n+1) H(+)(in) = a plastoquinol + NADP(+) + n H(+)(out). In terms of biological role, NDH shuttles electrons from NAD(P)H:plastoquinone, via FMN and iron-sulfur (Fe-S) centers, to quinones in the photosynthetic chain and possibly in a chloroplast respiratory chain. The immediate electron acceptor for the enzyme in this species is believed to be plastoquinone. Couples the redox reaction to proton translocation, and thus conserves the redox energy in a proton gradient. The sequence is that of NAD(P)H-quinone oxidoreductase subunit 3, chloroplastic from Lotus japonicus (Lotus corniculatus var. japonicus).